The following is a 729-amino-acid chain: Phosphoribosylformylglycinamidine synthase subunit PurL (729 aa).

The active site involves His-54. Tyr-57 and Lys-96 together coordinate ATP. A Mg(2+)-binding site is contributed by Glu-98. Residues 99 to 102 (SHNH) and Arg-121 each bind substrate. The active-site Proton acceptor is the His-100. Asp-122 contacts Mg(2+). Gln-245 contributes to the substrate binding site. Asp-273 provides a ligand contact to Mg(2+). 317–319 (ETQ) contributes to the substrate binding site. Residues Asp-495 and Gly-532 each coordinate ATP. Asn-533 lines the Mg(2+) pocket. Ser-535 is a binding site for substrate.

It belongs to the FGAMS family. In terms of assembly, monomer. Part of the FGAM synthase complex composed of 1 PurL, 1 PurQ and 2 PurS subunits.

Its subcellular location is the cytoplasm. The enzyme catalyses N(2)-formyl-N(1)-(5-phospho-beta-D-ribosyl)glycinamide + L-glutamine + ATP + H2O = 2-formamido-N(1)-(5-O-phospho-beta-D-ribosyl)acetamidine + L-glutamate + ADP + phosphate + H(+). Its pathway is purine metabolism; IMP biosynthesis via de novo pathway; 5-amino-1-(5-phospho-D-ribosyl)imidazole from N(2)-formyl-N(1)-(5-phospho-D-ribosyl)glycinamide: step 1/2. Part of the phosphoribosylformylglycinamidine synthase complex involved in the purines biosynthetic pathway. Catalyzes the ATP-dependent conversion of formylglycinamide ribonucleotide (FGAR) and glutamine to yield formylglycinamidine ribonucleotide (FGAM) and glutamate. The FGAM synthase complex is composed of three subunits. PurQ produces an ammonia molecule by converting glutamine to glutamate. PurL transfers the ammonia molecule to FGAR to form FGAM in an ATP-dependent manner. PurS interacts with PurQ and PurL and is thought to assist in the transfer of the ammonia molecule from PurQ to PurL. The sequence is that of Phosphoribosylformylglycinamidine synthase subunit PurL from Staphylococcus aureus (strain Mu3 / ATCC 700698).